Here is a 109-residue protein sequence, read N- to C-terminus: FK506-binding protein (109 aa).

Positions 20–108 constitute a PPIase FKBP-type domain; the sequence is GKEITVHYTG…IFEVELLKVY (89 aa).

It belongs to the FKBP-type PPIase family.

The enzyme catalyses [protein]-peptidylproline (omega=180) = [protein]-peptidylproline (omega=0). With respect to regulation, inhibited by FK506. Its function is as follows. PPIases accelerate the folding of proteins. In Neisseria meningitidis serogroup A / serotype 4A (strain DSM 15465 / Z2491), this protein is FK506-binding protein (fbp).